The following is a 3646-amino-acid chain: Platelet adherence protein A (3646 aa).

Residues 1–33 (MKDFLKKVLILFTVLLMSMPSSVLNLGTSVVRA) form the signal peptide. The does not bind platelets stretch occupies residues 34–359 (DDPLNIETRR…KNVSFYVNEQ (326 aa)). The F2, binds platelets, fibronectin, vitronectin, salivary pellicle, causes ADP secretion by dense granules stretch occupies residues 34-690 (DDPLNIETRR…NQDAHAKTKD (657 aa)). The binds platelets stretch occupies residues 34–1328 (DDPLNIETRR…KFVLSDTLEE (1295 aa)). The VWFA domain occupies 75–373 (DLVILQDASG…VFSQKILESV (299 aa)). Positions 214–216 (NGR) match the Integrin-like recognition motif NGR motif. The Integrin-like recognition motif RGT motif lies at 416 to 418 (RGT). Positions 439–466 (KNSFDYDLSKEARAPETDEDSEVDPPEN) are disordered. Residues 445–454 (DLSKEARAPE) show a composition bias toward basic and acidic residues. Residues 485 to 487 (AGD) carry the Integrin-like recognition motif AGD motif. The interval 709-3205 (TEVDKKVNEK…TVPNKATIAF (2497 aa)) is central region with RrgB repeats. 2 stretches are compositionally biased toward basic and acidic residues: residues 1124–1135 (KDKNDHKGEKET) and 1563–1573 (DHNPKFHKDSN). 12 disordered regions span residues 1124–1153 (KDKN…KKIN), 1563–1589 (DHNP…PIEK), 2011–2036 (FNND…EPEL), 2170–2198 (EKDS…KPSA), 2320–2343 (KTEK…IKKE), 2467–2492 (PNRP…PEIK), 2611–2644 (ASYR…PIEK), 2767–2792 (FNND…EPEL), 2916–2948 (PNKP…NSKP), 3202–3252 (TIAF…NPST), 3371–3412 (AAAK…AALE), and 3550–3618 (NDKP…PKTG). Over residues 2011 to 2022 (FNNDPGTEQSSK) the composition is skewed to polar residues. The segment covering 2767 to 2778 (FNNDPGTEQSSK) has biased composition (polar residues). Over residues 3210 to 3220 (GKNGTKESNPV) the composition is skewed to polar residues. Residues 3223 to 3237 (RPRDPEKPEEPKPNE) are compositionally biased toward basic and acidic residues. 2 coiled-coil regions span residues 3326 to 3376 (IAKI…AKEK) and 3408 to 3475 (VAAL…VNDK). Residues 3371 to 3406 (AAAKEKAAAAPATPAPASDSDAGNATATPAPADNNA) are compositionally biased toward low complexity. Positions 3550–3560 (NDKPKVTNTVN) are enriched in polar residues. The span at 3563-3605 (PPEPTTPPQTPPHTPPTTPGTPPPTTPDTPPAPKGDLPPAPTP) shows a compositional bias: pro residues. The LPXTG sorting signal motif lies at 3614 to 3618 (LPKTG). Threonine 3617 bears the Pentaglycyl murein peptidoglycan amidated threonine mark. Positions 3618–3646 (GTSATMVNEVIIGMILVLMGLLLRRKPKH) are cleaved as a propeptide — removed by sortase.

Its subcellular location is the secreted. It is found in the cell wall. Whole bacterial adhesion to Chinese hamster ovary cells expressing GPIIbIIIa is abrogated by integrin inhibitor RGDS and GPIIbIIIa inhibitor Abciximab. A cell wall protein involved with Hsa in host cell interactions required for colonization and pathogenesis. Involved in recognition of platelets. Interacts with human platelet integrin receptor GPIIbIIIa (a complex of ITGA2B and ITGB3). Involved in platelet spreading, presumably by activation of outside-in signaling leading to platelet activation and then spreading. Spreading also involves GPIIbIIIa. Binding to platelets under static conditions causes platelet dense granules to secrete ADP (similar to release induced by fibrinogen binding), has no effect on platelet alpha granule release. The N-terminal 656 aa residue fragment (called F2) also binds platelets, causes dense granule secretion and allows platelet spreading. Acts in concert with Hsa to promote binding to human fibronectin (FN1) and vitronectin (VTN), and biofilm formation. F2 bind activated platelets more strongly than unactivated platelets. Binding to both FN1 and VTN is mediated at least in part by their glycosylation. The protein is Platelet adherence protein A of Streptococcus gordonii (strain Challis / ATCC 35105 / BCRC 15272 / CH1 / DL1 / V288).